The chain runs to 600 residues: Aspartate--tRNA(Asp/Asn) ligase (600 aa).

E174 provides a ligand contact to L-aspartate. The segment at 198–201 (QLFK) is aspartate. R220 serves as a coordination point for L-aspartate. ATP-binding positions include 220 to 222 (RDE) and Q229. L-aspartate is bound at residue H457. E491 lines the ATP pocket. L-aspartate is bound at residue R498. 543 to 546 (GLDR) lines the ATP pocket.

It belongs to the class-II aminoacyl-tRNA synthetase family. Type 1 subfamily. As to quaternary structure, homodimer.

It is found in the cytoplasm. It catalyses the reaction tRNA(Asx) + L-aspartate + ATP = L-aspartyl-tRNA(Asx) + AMP + diphosphate. Aspartyl-tRNA synthetase with relaxed tRNA specificity since it is able to aspartylate not only its cognate tRNA(Asp) but also tRNA(Asn). Reaction proceeds in two steps: L-aspartate is first activated by ATP to form Asp-AMP and then transferred to the acceptor end of tRNA(Asp/Asn). The sequence is that of Aspartate--tRNA(Asp/Asn) ligase from Burkholderia pseudomallei (strain 668).